The primary structure comprises 337 residues: m7GpppX diphosphatase (337 aa).

The interval Met1–Ser37 is disordered. Ala2 bears the N-acetylalanine mark. The nuclear localization signal (NLS) motif lies at Lys10–Arg13. A phosphoserine mark is found at Ser24 and Ser101. N6-acetyllysine is present on residues Lys138 and Lys142. The short motif at Lys142 to Thr154 is the nuclear export sequence (NES) element. Substrate-binding positions include Trp175, Glu185, Asp205, Lys207, and His268–His279. The short motif at His275–His279 is the Histidine triad motif element. The Nucleophile role is filled by His277.

This sequence belongs to the HIT family. Homodimer. Associates with components of the exosome multienzyme ribonuclease complex, such as EXOSC3 and EXOSC4. Interacts with NDOR1.

It is found in the cytoplasm. It localises to the nucleus. It carries out the reaction a 5'-end (N(7)-methyl 5'-triphosphoguanosine)-ribonucleoside in mRNA + H2O = N(7)-methyl-GMP + a 5'-end diphospho-ribonucleoside in mRNA + 2 H(+). With respect to regulation, the hydrolytic product 7-methylguanosine diphosphate (m7GDP) efficiently inhibits the decapping scavenger activity and acts as a competitive inhibitor in vitro. Inhibited by 2,4-diaminoquinazoline. In terms of biological role, decapping scavenger enzyme that catalyzes the cleavage of a residual cap structure following the degradation of mRNAs by the 3'-&gt;5' exosome-mediated mRNA decay pathway. Hydrolyzes cap analog structures like 7-methylguanosine nucleoside triphosphate (m7GpppG) with up to 10 nucleotide substrates (small capped oligoribonucleotides) and specifically releases 5'-phosphorylated RNA fragments and 7-methylguanosine monophosphate (m7GMP). Cleaves cap analog structures like tri-methyl guanosine nucleoside triphosphate (m3(2,2,7)GpppG) with very poor efficiency. Does not hydrolyze unmethylated cap analog (GpppG) and shows no decapping activity on intact m7GpppG-capped mRNA molecules longer than 25 nucleotides. Does not hydrolyze 7-methylguanosine diphosphate (m7GDP) to m7GMP. May also play a role in the 5'-&gt;3 mRNA decay pathway; m7GDP, the downstream product released by the 5'-&gt;3' mRNA mediated decapping activity, may be also converted by DCPS to m7GMP. Binds to m7GpppG and strongly to m7GDP. Plays a role in first intron splicing of pre-mRNAs. Inhibits activation-induced cell death. This is m7GpppX diphosphatase (DCPS) from Sus scrofa (Pig).